We begin with the raw amino-acid sequence, 254 residues long: 3-oxo-5-alpha-steroid 4-dehydrogenase 2 (254 aa).

A run of 4 helical transmembrane segments spans residues 8 to 28 (VPVLAGSATLATMGTLILCFG), 72 to 92 (PRSLFGPPGNVLLGLFSAHYF), 146 to 166 (FSVGVFFFILGMGINIHSDCM), and 206 to 226 (LATWSVPAFAFAFFTLCFLGM).

The protein belongs to the steroid 5-alpha reductase family.

It localises to the microsome membrane. It is found in the endoplasmic reticulum membrane. It catalyses the reaction a 3-oxo-5alpha-steroid + NADP(+) = a 3-oxo-Delta(4)-steroid + NADPH + H(+). It carries out the reaction 17beta-hydroxy-5alpha-androstan-3-one + NADP(+) = testosterone + NADPH + H(+). The catalysed reaction is 5alpha-pregnane-3,20-dione + NADP(+) = progesterone + NADPH + H(+). Converts testosterone (T) into 5-alpha-dihydrotestosterone (DHT) and progesterone or corticosterone into their corresponding 5-alpha-3-oxosteroids. It plays a central role in sexual differentiation and androgen physiology. The protein is 3-oxo-5-alpha-steroid 4-dehydrogenase 2 (Srd5a2) of Mus musculus (Mouse).